Consider the following 510-residue polypeptide: MRKFIAALRLALAAAAHLLLTLPPAQCYWLNPEIYDAGGLSRRAFPEGFVFGTAASAYQVEGMAKQGGRGPSIWDAFIEKPGTIPNNATADVTVDEYHRYKEDVNIMKNMGFDAYRFSISWSRIFPNGTGMVNQEGVDYYNRLIDYMVKKGIKPYANLYHYDLPLALHEQYLGWLSPNIVEAFADYADFCFQTFGDRVKDWFTFNEPRCVAALGYDNGFHAPGRCSGCDAGGNSTTEPYLAAHHLILSHAAAVKRYREKYQLYQKGRIGILLDFVWYEPFSDSNADRAAAQRARDFHLGWFLDPIIHGRYPYSMLEIVKDRMPTFSDEESRMVKDSIDYVGINHYTSFYMKDPGPWNLTPTSYQDDWHVGFAYERNGVPIGAQANSYWLYIVPWGINKAVTYVKETYGNPTMILSENGMDQPGNVSITQGVHDTVRIRYYRNYITELKKAIDDGAKVIGYFAWSLLDNFEWRLGYTSRFGIVYVDYKTLKRYPKDSAFWFKNMLSSKKRN.

The N-terminal stretch at 1 to 27 (MRKFIAALRLALAAAAHLLLTLPPAQC) is a signal peptide. Position 59 (glutamine 59) interacts with a beta-D-glucoside. Asparagine 87 and asparagine 127 each carry an N-linked (GlcNAc...) asparagine glycan. A beta-D-glucoside contacts are provided by residues histidine 160 and 205–206 (NE). Glutamate 206 (proton donor) is an active-site residue. Cysteine 225 and cysteine 228 are joined by a disulfide. An N-linked (GlcNAc...) asparagine glycan is attached at asparagine 233. 2 residues coordinate a beta-D-glucoside: tyrosine 345 and glutamate 416. Residue glutamate 416 is the Nucleophile of the active site. A glycan (N-linked (GlcNAc...) asparagine) is linked at asparagine 424. Residues tryptophan 463, 470 to 471 (EW), and phenylalanine 479 each bind a beta-D-glucoside.

The protein belongs to the glycosyl hydrolase 1 family.

The catalysed reaction is Hydrolysis of terminal, non-reducing beta-D-glucosyl residues with release of beta-D-glucose.. Functionally, hydrolyzes p-nitrophenyl beta-D-glucoside, p-nitrophenyl beta-D-mannoside, p-nitrophenyl beta-D-galactoside, p-nitrophenyl beta-D-xyloside, p-nitrophenyl beta-D-fucoside, p-nitrophenyl beta-L-arabinoside, cello-oligosaccharides, laminari-oligosaccharides and sophorose. This chain is Beta-glucosidase 26 (BGLU26), found in Oryza sativa subsp. japonica (Rice).